Reading from the N-terminus, the 462-residue chain is BBSome complex member bbs-4 (462 aa).

The disordered stretch occupies residues methionine 1–proline 46. 7 TPR repeats span residues glutamate 89–asparagine 122, arginine 124–asparagine 156, alanine 199–asparagine 232, glutamate 234–asparagine 266, glutamine 268–asparagine 300, tyrosine 335–asparagine 368, and alanine 369–proline 402.

The protein belongs to the BBS4 family. Part of BBSome complex, that contains at least bbs-1, bbs-2, bbs-4, bbs-5, osm-12, bbs-8/ttc-8 and bbs-9. Interacts (via C-terminus) with bbs-5; the interaction is direct.

The protein resides in the cytoplasm. It is found in the cytoskeleton. The protein localises to the microtubule organizing center. It localises to the centrosome. Its subcellular location is the cell projection. The protein resides in the cilium membrane. In terms of biological role, component of the BBSome complex. The BBSome complex is thought to function as a coat complex required for sorting of specific membrane proteins to the primary cilia. The BBSome complex is required for ciliogenesis but is dispensable for centriolar satellite function. Required for proper BBSome complex assembly and its ciliary localization. May be required for microtubule anchoring at the centrosome but not for microtubule nucleation. May be required for the dynein-mediated transport of pericentriolar proteins to the centrosome. Required, redundantly with bbs-5, for cilia biogenesis and both the assembly and movement of intraflagellar transport proteins along the ciliary axoneme. Plays a role in the removal of degraded mechanosensory receptors within the cilia. The chain is BBSome complex member bbs-4 from Caenorhabditis elegans.